The following is a 248-amino-acid chain: uncharacterized protein (248 aa).

This is an uncharacterized protein from Ostreid herpesvirus 1 (isolate France) (OsHV-1).